A 106-amino-acid chain; its full sequence is MSNLIPGEIIPEQGQIELNLSKQVKTVTVSNSGDRPVQVGSHYHFYEANKALIFDREITYGMRLDIPAGTAIRFEPGDTTDVKLVPFSGLRNAYGFNSLVNGSLNS.

This sequence belongs to the urease beta subunit family. As to quaternary structure, heterotrimer of UreA (gamma), UreB (beta) and UreC (alpha) subunits. Three heterotrimers associate to form the active enzyme.

The protein resides in the cytoplasm. The enzyme catalyses urea + 2 H2O + H(+) = hydrogencarbonate + 2 NH4(+). It functions in the pathway nitrogen metabolism; urea degradation; CO(2) and NH(3) from urea (urease route): step 1/1. In Prochlorococcus marinus (strain AS9601), this protein is Urease subunit beta.